We begin with the raw amino-acid sequence, 528 residues long: Bifunctional pantoate ligase/cytidylate kinase (528 aa).

A pantoate--beta-alanine ligase region spans residues 1 to 293; sequence MRLFTTIAGL…IGSCRLIDNI (293 aa). 34-41 serves as a coordination point for ATP; it reads MGALHKGH. The active-site Proton donor is the H41. Residue Q65 participates in (R)-pantoate binding. Q65 lines the beta-alanine pocket. Residue 160-163 participates in ATP binding; that stretch reads GQKD. A (R)-pantoate-binding site is contributed by Q166. ATP is bound by residues I189 and 197 to 200; that span reads ISSR. The tract at residues 294–528 is cytidylate kinase; that stretch reads LLRNRKPIIA…YGKSSVNNII (235 aa).

The protein in the N-terminal section; belongs to the pantothenate synthetase family. It in the C-terminal section; belongs to the cytidylate kinase family. Type 1 subfamily.

It localises to the cytoplasm. The enzyme catalyses (R)-pantoate + beta-alanine + ATP = (R)-pantothenate + AMP + diphosphate + H(+). The catalysed reaction is CMP + ATP = CDP + ADP. It carries out the reaction dCMP + ATP = dCDP + ADP. It participates in cofactor biosynthesis; (R)-pantothenate biosynthesis; (R)-pantothenate from (R)-pantoate and beta-alanine: step 1/1. Functionally, catalyzes the condensation of pantoate with beta-alanine in an ATP-dependent reaction via a pantoyl-adenylate intermediate. Its function is as follows. Catalyzes the transfer of a phosphate group from ATP to either CMP or dCMP to form CDP or dCDP and ADP, respectively. This Trichodesmium erythraeum (strain IMS101) protein is Bifunctional pantoate ligase/cytidylate kinase.